The sequence spans 208 residues: Sec-independent protein translocase protein TatB (208 aa).

A helical transmembrane segment spans residues M1–G21. The span at A178–A189 shows a compositional bias: low complexity. Positions A178–P208 are disordered.

This sequence belongs to the TatB family. The Tat system comprises two distinct complexes: a TatABC complex, containing multiple copies of TatA, TatB and TatC subunits, and a separate TatA complex, containing only TatA subunits. Substrates initially bind to the TatABC complex, which probably triggers association of the separate TatA complex to form the active translocon.

It localises to the cell inner membrane. Its function is as follows. Part of the twin-arginine translocation (Tat) system that transports large folded proteins containing a characteristic twin-arginine motif in their signal peptide across membranes. Together with TatC, TatB is part of a receptor directly interacting with Tat signal peptides. TatB may form an oligomeric binding site that transiently accommodates folded Tat precursor proteins before their translocation. The protein is Sec-independent protein translocase protein TatB of Xanthomonas euvesicatoria pv. vesicatoria (strain 85-10) (Xanthomonas campestris pv. vesicatoria).